A 223-amino-acid chain; its full sequence is MTSRIGVITFPGTLDDVDAVRAVRLAGAEPVELWHADEDLKNVDAVVVPGGFSYGDYLRAGAIAAIAPAMKSVVAAAERGTPVLGICNGFQILQEAGLLPGALTRNEGLHFVCRDIYLDVENTSTAWTNQFAEGTKILVPSKHGEGRFQASEETLERLEGEGRVVFRYVENHNGSRNSIAGVCSENGRVVGLMPHPEHAVETLTGPSLDGLGLFQSVLSTLVS.

In terms of domain architecture, Glutamine amidotransferase type-1 spans 4–223 (RIGVITFPGT…FQSVLSTLVS (220 aa)). Residue Cys-87 is the Nucleophile of the active site. Active-site residues include His-195 and Glu-197.

In terms of assembly, part of the FGAM synthase complex composed of 1 PurL, 1 PurQ and 2 PurS subunits.

The protein localises to the cytoplasm. It catalyses the reaction N(2)-formyl-N(1)-(5-phospho-beta-D-ribosyl)glycinamide + L-glutamine + ATP + H2O = 2-formamido-N(1)-(5-O-phospho-beta-D-ribosyl)acetamidine + L-glutamate + ADP + phosphate + H(+). It carries out the reaction L-glutamine + H2O = L-glutamate + NH4(+). It participates in purine metabolism; IMP biosynthesis via de novo pathway; 5-amino-1-(5-phospho-D-ribosyl)imidazole from N(2)-formyl-N(1)-(5-phospho-D-ribosyl)glycinamide: step 1/2. Its function is as follows. Part of the phosphoribosylformylglycinamidine synthase complex involved in the purines biosynthetic pathway. Catalyzes the ATP-dependent conversion of formylglycinamide ribonucleotide (FGAR) and glutamine to yield formylglycinamidine ribonucleotide (FGAM) and glutamate. The FGAM synthase complex is composed of three subunits. PurQ produces an ammonia molecule by converting glutamine to glutamate. PurL transfers the ammonia molecule to FGAR to form FGAM in an ATP-dependent manner. PurS interacts with PurQ and PurL and is thought to assist in the transfer of the ammonia molecule from PurQ to PurL. The chain is Phosphoribosylformylglycinamidine synthase subunit PurQ from Corynebacterium jeikeium (strain K411).